Here is a 572-residue protein sequence, read N- to C-terminus: Proline--tRNA ligase (572 aa).

The protein belongs to the class-II aminoacyl-tRNA synthetase family. ProS type 1 subfamily. As to quaternary structure, homodimer.

The protein resides in the cytoplasm. It carries out the reaction tRNA(Pro) + L-proline + ATP = L-prolyl-tRNA(Pro) + AMP + diphosphate. Its function is as follows. Catalyzes the attachment of proline to tRNA(Pro) in a two-step reaction: proline is first activated by ATP to form Pro-AMP and then transferred to the acceptor end of tRNA(Pro). As ProRS can inadvertently accommodate and process non-cognate amino acids such as alanine and cysteine, to avoid such errors it has two additional distinct editing activities against alanine. One activity is designated as 'pretransfer' editing and involves the tRNA(Pro)-independent hydrolysis of activated Ala-AMP. The other activity is designated 'posttransfer' editing and involves deacylation of mischarged Ala-tRNA(Pro). The misacylated Cys-tRNA(Pro) is not edited by ProRS. In Bacillus licheniformis (strain ATCC 14580 / DSM 13 / JCM 2505 / CCUG 7422 / NBRC 12200 / NCIMB 9375 / NCTC 10341 / NRRL NRS-1264 / Gibson 46), this protein is Proline--tRNA ligase.